A 265-amino-acid chain; its full sequence is Pyrroline-5-carboxylate reductase (265 aa).

Belongs to the pyrroline-5-carboxylate reductase family.

It localises to the cytoplasm. The enzyme catalyses L-proline + NADP(+) = (S)-1-pyrroline-5-carboxylate + NADPH + 2 H(+). It catalyses the reaction L-proline + NAD(+) = (S)-1-pyrroline-5-carboxylate + NADH + 2 H(+). Its pathway is amino-acid biosynthesis; L-proline biosynthesis; L-proline from L-glutamate 5-semialdehyde: step 1/1. Its function is as follows. Catalyzes the reduction of 1-pyrroline-5-carboxylate (PCA) to L-proline. The protein is Pyrroline-5-carboxylate reductase of Aquifex aeolicus (strain VF5).